Reading from the N-terminus, the 232-residue chain is Phosphatidylserine decarboxylase proenzyme (232 aa).

The active-site Schiff-base intermediate with substrate; via pyruvic acid is the S190. S190 carries the post-translational modification Pyruvic acid (Ser); by autocatalysis.

The protein belongs to the phosphatidylserine decarboxylase family. PSD-A subfamily. Heterodimer of a large membrane-associated beta subunit and a small pyruvoyl-containing alpha subunit. The cofactor is pyruvate. In terms of processing, is synthesized initially as an inactive proenzyme. Formation of the active enzyme involves a self-maturation process in which the active site pyruvoyl group is generated from an internal serine residue via an autocatalytic post-translational modification. Two non-identical subunits are generated from the proenzyme in this reaction, and the pyruvate is formed at the N-terminus of the alpha chain, which is derived from the carboxyl end of the proenzyme. The post-translation cleavage follows an unusual pathway, termed non-hydrolytic serinolysis, in which the side chain hydroxyl group of the serine supplies its oxygen atom to form the C-terminus of the beta chain, while the remainder of the serine residue undergoes an oxidative deamination to produce ammonia and the pyruvoyl prosthetic group on the alpha chain.

It is found in the cell membrane. The catalysed reaction is a 1,2-diacyl-sn-glycero-3-phospho-L-serine + H(+) = a 1,2-diacyl-sn-glycero-3-phosphoethanolamine + CO2. The protein operates within phospholipid metabolism; phosphatidylethanolamine biosynthesis; phosphatidylethanolamine from CDP-diacylglycerol: step 2/2. Functionally, catalyzes the formation of phosphatidylethanolamine (PtdEtn) from phosphatidylserine (PtdSer). In Afipia carboxidovorans (strain ATCC 49405 / DSM 1227 / KCTC 32145 / OM5) (Oligotropha carboxidovorans), this protein is Phosphatidylserine decarboxylase proenzyme.